The sequence spans 252 residues: Thiazole synthase (252 aa).

Lysine 91 functions as the Schiff-base intermediate with DXP in the catalytic mechanism. 1-deoxy-D-xylulose 5-phosphate is bound by residues glycine 152, 179–180 (AG), and 201–202 (NT).

This sequence belongs to the ThiG family. In terms of assembly, homotetramer. Forms heterodimers with either ThiH or ThiS.

It is found in the cytoplasm. It catalyses the reaction [ThiS sulfur-carrier protein]-C-terminal-Gly-aminoethanethioate + 2-iminoacetate + 1-deoxy-D-xylulose 5-phosphate = [ThiS sulfur-carrier protein]-C-terminal Gly-Gly + 2-[(2R,5Z)-2-carboxy-4-methylthiazol-5(2H)-ylidene]ethyl phosphate + 2 H2O + H(+). It participates in cofactor biosynthesis; thiamine diphosphate biosynthesis. In terms of biological role, catalyzes the rearrangement of 1-deoxy-D-xylulose 5-phosphate (DXP) to produce the thiazole phosphate moiety of thiamine. Sulfur is provided by the thiocarboxylate moiety of the carrier protein ThiS. In vitro, sulfur can be provided by H(2)S. The protein is Thiazole synthase of Erwinia pyrifoliae (strain DSM 12162 / Ep1/96).